The sequence spans 825 residues: Glycerol-3-phosphate acyltransferase (825 aa).

Residues 304–309 carry the HXXXXD motif motif; sequence CHRSHM. The tract at residues 803–825 is disordered; the sequence is MPAETSNQPEAPETPEPEGKTES.

This sequence belongs to the GPAT/DAPAT family.

The protein resides in the cell inner membrane. The catalysed reaction is sn-glycerol 3-phosphate + an acyl-CoA = a 1-acyl-sn-glycero-3-phosphate + CoA. Its pathway is phospholipid metabolism; CDP-diacylglycerol biosynthesis; CDP-diacylglycerol from sn-glycerol 3-phosphate: step 1/3. This is Glycerol-3-phosphate acyltransferase from Yersinia pseudotuberculosis serotype O:1b (strain IP 31758).